The following is a 471-amino-acid chain: Methylenetetrahydrofolate--tRNA-(uracil-5-)-methyltransferase TrmFO (471 aa).

Position 9 to 14 (9 to 14 (GGGLSG)) interacts with FAD.

Belongs to the MnmG family. TrmFO subfamily. FAD serves as cofactor.

The protein localises to the cytoplasm. The catalysed reaction is uridine(54) in tRNA + (6R)-5,10-methylene-5,6,7,8-tetrahydrofolate + NADH + H(+) = 5-methyluridine(54) in tRNA + (6S)-5,6,7,8-tetrahydrofolate + NAD(+). It carries out the reaction uridine(54) in tRNA + (6R)-5,10-methylene-5,6,7,8-tetrahydrofolate + NADPH + H(+) = 5-methyluridine(54) in tRNA + (6S)-5,6,7,8-tetrahydrofolate + NADP(+). In terms of biological role, catalyzes the folate-dependent formation of 5-methyl-uridine at position 54 (M-5-U54) in all tRNAs. In Beijerinckia indica subsp. indica (strain ATCC 9039 / DSM 1715 / NCIMB 8712), this protein is Methylenetetrahydrofolate--tRNA-(uracil-5-)-methyltransferase TrmFO.